The primary structure comprises 512 residues: Kelch repeat protein C2 (512 aa).

Residues Glu2–Ile67 enclose the BTB domain. The BACK domain maps to Cys102–Asn176. Kelch repeat units lie at residues Ile216–Cys261, Leu262–Gly307, Leu309–Asp354, Ile356–Gly403, Ile405–Asp449, and Leu452–Ser498.

It belongs to the poxviruses Kelch family.

This is Kelch repeat protein C2 from Rabbitpox virus (strain Utrecht) (RPV).